The following is a 188-amino-acid chain: Putative adenylate kinase (188 aa).

Positions 10, 12, 13, 14, and 15 each coordinate ATP. Residues 30–53 (HVSSFLIQNKAFSEYDELRQSYVI) form an NMP region. Residues 103–113 (RRGWGELKIAE) form an LID region. ATP is bound by residues R104 and K142.

The protein belongs to the adenylate kinase family. AK6 subfamily. In terms of assembly, interacts with uS11. Not a structural component of 40S pre-ribosomes, but transiently interacts with them by binding to uS11.

The catalysed reaction is AMP + ATP = 2 ADP. It catalyses the reaction ATP + H2O = ADP + phosphate + H(+). Its function is as follows. Broad-specificity nucleoside monophosphate (NMP) kinase that catalyzes the reversible transfer of the terminal phosphate group between nucleoside triphosphates and monophosphates. Also has ATPase activity. Involved in the late maturation steps of the 30S ribosomal particles, specifically 16S rRNA maturation. While NMP activity is not required for ribosome maturation, ATPase activity is. Associates transiently with small ribosomal subunit protein uS11. ATP hydrolysis breaks the interaction with uS11. May temporarily remove uS11 from the ribosome to enable a conformational change of the ribosomal RNA that is needed for the final maturation step of the small ribosomal subunit. This chain is Putative adenylate kinase, found in Sulfurisphaera tokodaii (strain DSM 16993 / JCM 10545 / NBRC 100140 / 7) (Sulfolobus tokodaii).